An 834-amino-acid polypeptide reads, in one-letter code: WPP domain-associated protein (834 aa).

Coiled-coil stretches lie at residues 410–456, 574–700, and 792–812; these read SFGN…RLQH, SLDT…VLAI, and AEAEVDLLGDEVDTLLSLVEK.

In terms of assembly, interacts with MAF1. Expressed in seedlings, leaves and fruits.

Its subcellular location is the golgi apparatus. The protein resides in the cytoplasm. The sequence is that of WPP domain-associated protein (WAP) from Solanum lycopersicum (Tomato).